The chain runs to 316 residues: Sulfate adenylyltransferase subunit 2 (316 aa).

The segment at 297–316 is disordered; that stretch reads RAIDRDQSGSMEKKKREGYF.

Belongs to the PAPS reductase family. CysD subfamily. In terms of assembly, heterodimer composed of CysD, the smaller subunit, and CysN.

The enzyme catalyses sulfate + ATP + H(+) = adenosine 5'-phosphosulfate + diphosphate. It functions in the pathway sulfur metabolism; hydrogen sulfide biosynthesis; sulfite from sulfate: step 1/3. Its function is as follows. With CysN forms the ATP sulfurylase (ATPS) that catalyzes the adenylation of sulfate producing adenosine 5'-phosphosulfate (APS) and diphosphate, the first enzymatic step in sulfur assimilation pathway. APS synthesis involves the formation of a high-energy phosphoric-sulfuric acid anhydride bond driven by GTP hydrolysis by CysN coupled to ATP hydrolysis by CysD. This is Sulfate adenylyltransferase subunit 2 from Allorhizobium ampelinum (strain ATCC BAA-846 / DSM 112012 / S4) (Agrobacterium vitis (strain S4)).